A 159-amino-acid chain; its full sequence is MQKRAIYPGTFDPITNGHIDIVTRATQMFDHVILAIAASPSKKTMFTLEERVELAQQATAHLGNVEVVGFSDLMANFARNQHATVLIRGLRAVADFEYEMQLAHMNRHLMPELESVFLMPSKEWSFISSSLVKEVARHQGDVTHFLPENVYQALMAKLA.

T10 lines the substrate pocket. ATP is bound by residues 10–11 (TF) and H18. Substrate is bound by residues K42, M74, and R88. ATP-binding positions include 89 to 91 (GLR), E99, and 124 to 130 (WSFISSS).

The protein belongs to the bacterial CoaD family. As to quaternary structure, homohexamer. Mg(2+) is required as a cofactor.

Its subcellular location is the cytoplasm. It catalyses the reaction (R)-4'-phosphopantetheine + ATP + H(+) = 3'-dephospho-CoA + diphosphate. The protein operates within cofactor biosynthesis; coenzyme A biosynthesis; CoA from (R)-pantothenate: step 4/5. Functionally, reversibly transfers an adenylyl group from ATP to 4'-phosphopantetheine, yielding dephospho-CoA (dPCoA) and pyrophosphate. The chain is Phosphopantetheine adenylyltransferase from Shigella dysenteriae serotype 1 (strain Sd197).